Consider the following 474-residue polypeptide: C6 finger domain transcription factor aclZ (474 aa).

The zn(2)-C6 fungal-type DNA-binding region spans 42 to 69; the sequence is CNQCHAAKVRCSGERTGCDRCNNLQYQC. 2 disordered regions span residues 85–148 and 177–206; these read RGNK…SHSA and MSSD…DSHT. The segment covering 90–105 has biased composition (polar residues); sequence VRTTTEALQRPATAST. A compositionally biased stretch (basic and acidic residues) spans 117–138; that stretch reads TDQRSENDPLSRSDFGEQDAAH.

Its subcellular location is the nucleus. Transcription factor that specifically regulates the gene cluster that mediates the biosynthesis of aspirochlorine (or antibiotic A30641), an unusual halogenated spiro compound with distinctive antifungal properties due to selective inhibition of protein biosynthesis, and which is also active against bacteria, viruses, and murine tumor cells. This is C6 finger domain transcription factor aclZ from Aspergillus oryzae (strain ATCC 42149 / RIB 40) (Yellow koji mold).